Consider the following 260-residue polypeptide: MIRLVRELYQYRGLLISLVQRELKARYRGSFLGFLWTFLNPTLHMLVYVLLFTVVMRQNIPNFPFFMFVGLLPWIWFSTSVGGGASAISDRRDLLTKVRFPAQVLPTSVVVTNLCNFVLSLPLMLVLGMAYGQWPTWHVVLFPVVVLIQLTFTLALTYILAAINVTFRDLQHIVSNLLTLWFFATPVLYPLSTIQDESARSLMLALNPMVSLMTSYQAIFYEHRLPDAEPLMALAAVSVVLLWAASSIFESRREEFAESI.

The next 7 helical transmembrane spans lie at 31 to 51, 63 to 83, 109 to 129, 139 to 159, 173 to 193, 201 to 221, and 229 to 249; these read FLGF…YVLL, FPFF…SVGG, VVVT…VLGM, VVLF…LTYI, IVSN…PLST, SLML…AIFY, and EPLM…SSIF. The 221-residue stretch at 32-252 folds into the ABC transmembrane type-2 domain; sequence LGFLWTFLNP…WAASSIFESR (221 aa).

Belongs to the ABC-2 integral membrane protein family.

The protein localises to the cell inner membrane. Functionally, may form an ATP-driven O-antigen export apparatus, in association with RfbB. This Myxococcus xanthus protein is O-antigen export system permease protein RfbA (rfbA).